Reading from the N-terminus, the 225-residue chain is Lipoprotein CseA (225 aa).

The signal sequence occupies residues 1–36 (MRGLTDGRTPRGTRRTTQAASTAVAVFVALGVSLAG). Cysteine 37 carries the N-palmitoyl cysteine lipid modification. Cysteine 37 carries S-diacylglycerol cysteine lipidation. 2 disordered regions span residues 40-77 (GGTG…APDR) and 205-225 (THND…EPDS). The span at 60–73 (SASPAPAAKASPSK) shows a compositional bias: low complexity.

Its subcellular location is the cell membrane. May be involved in the stabilization of the cell envelope or may interact with the sensor protein CseC to modulate its activity, in response to cell envelope stress. This is Lipoprotein CseA (cseA) from Streptomyces coelicolor (strain ATCC BAA-471 / A3(2) / M145).